The following is a 235-amino-acid chain: 1-(5-phosphoribosyl)-5-[(5-phosphoribosylamino)methylideneamino] imidazole-4-carboxamide isomerase (235 aa).

Residue D8 is the Proton acceptor of the active site. Residue D129 is the Proton donor of the active site.

This sequence belongs to the HisA/HisF family.

The protein localises to the cytoplasm. The catalysed reaction is 1-(5-phospho-beta-D-ribosyl)-5-[(5-phospho-beta-D-ribosylamino)methylideneamino]imidazole-4-carboxamide = 5-[(5-phospho-1-deoxy-D-ribulos-1-ylimino)methylamino]-1-(5-phospho-beta-D-ribosyl)imidazole-4-carboxamide. The protein operates within amino-acid biosynthesis; L-histidine biosynthesis; L-histidine from 5-phospho-alpha-D-ribose 1-diphosphate: step 4/9. This chain is 1-(5-phosphoribosyl)-5-[(5-phosphoribosylamino)methylideneamino] imidazole-4-carboxamide isomerase, found in Thermoanaerobacter sp. (strain X514).